The chain runs to 197 residues: Xanthine phosphoribosyltransferase (197 aa).

Positions 20 and 27 each coordinate xanthine. 128–132 (ANGQA) contributes to the 5-phospho-alpha-D-ribose 1-diphosphate binding site. Lysine 156 serves as a coordination point for xanthine.

It belongs to the purine/pyrimidine phosphoribosyltransferase family. Xpt subfamily. As to quaternary structure, homodimer.

It localises to the cytoplasm. It catalyses the reaction XMP + diphosphate = xanthine + 5-phospho-alpha-D-ribose 1-diphosphate. It participates in purine metabolism; XMP biosynthesis via salvage pathway; XMP from xanthine: step 1/1. In terms of biological role, converts the preformed base xanthine, a product of nucleic acid breakdown, to xanthosine 5'-monophosphate (XMP), so it can be reused for RNA or DNA synthesis. This is Xanthine phosphoribosyltransferase from Lactococcus lactis subsp. cremoris (strain SK11).